The following is a 74-amino-acid chain: Protein WFDC9 (74 aa).

The N-terminal stretch at 1-19 is a signal peptide; it reads MKFWILLLTVSAHGIVVFL.

It is found in the secreted. The polypeptide is Protein WFDC9 (Wfdc9) (Rattus norvegicus (Rat)).